Here is a 161-residue protein sequence, read N- to C-terminus: Transcriptional repressor NrdR (161 aa).

A compositionally biased stretch (polar residues) spans 1–11; sequence MRCPSCNSLDT. The disordered stretch occupies residues 1–20; that stretch reads MRCPSCNSLDTQVKDSRPTE. Residues 3–34 fold into a zinc finger; sequence CPSCNSLDTQVKDSRPTEDSSVIRRRRVCVTC. In terms of domain architecture, ATP-cone spans 49–139; it reads LTVIKRNGRR…VYRNFREAKD (91 aa).

It belongs to the NrdR family. It depends on Zn(2+) as a cofactor.

Its function is as follows. Negatively regulates transcription of bacterial ribonucleotide reductase nrd genes and operons by binding to NrdR-boxes. This Bradyrhizobium sp. (strain BTAi1 / ATCC BAA-1182) protein is Transcriptional repressor NrdR.